A 607-amino-acid polypeptide reads, in one-letter code: UvrABC system protein C (607 aa).

A GIY-YIG domain is found at 16 to 94 (GRPGVYRMFD…IKEWRPPYNI (79 aa)). In terms of domain architecture, UVR spans 203 to 238 (NALSDELNASMEKAAMALDFERAAELRDQVALLRRV).

The protein belongs to the UvrC family. As to quaternary structure, interacts with UvrB in an incision complex.

The protein resides in the cytoplasm. Its function is as follows. The UvrABC repair system catalyzes the recognition and processing of DNA lesions. UvrC both incises the 5' and 3' sides of the lesion. The N-terminal half is responsible for the 3' incision and the C-terminal half is responsible for the 5' incision. The sequence is that of UvrABC system protein C from Pseudomonas syringae pv. syringae (strain B728a).